The chain runs to 99 residues: Large ribosomal subunit protein bL21 (99 aa).

This sequence belongs to the bacterial ribosomal protein bL21 family. As to quaternary structure, part of the 50S ribosomal subunit. Contacts protein L20.

This protein binds to 23S rRNA in the presence of protein L20. The sequence is that of Large ribosomal subunit protein bL21 from Acholeplasma laidlawii (strain PG-8A).